Here is an 806-residue protein sequence, read N- to C-terminus: Fibroblast growth factor receptor 3 (806 aa).

A signal peptide spans 1–19; the sequence is MRAAWGSVWCLCLAAAVGA. Over 20 to 364 the chain is Extracellular; sequence LPAARRRGAE…ELMEMDDSGS (345 aa). The Ig-like C2-type 1 domain maps to 24–124; the sequence is RRRGAERSGG…VLGNFTVRVT (101 aa). A disulfide bond links Cys61 and Cys107. Residues Asn83, Asn96, and Asn118 are each glycosylated (N-linked (GlcNAc...) asparagine). The segment at 121 to 146 is disordered; sequence VRVTDSPSSGDDEDDDDESEDTGVPF. Residues 130–141 are compositionally biased toward acidic residues; it reads GDDEDDDDESED. 2 Ig-like C2-type domains span residues 150–238 and 247–349; these read PDKM…YQLD and PILQ…AWLT. Residues Cys170 and Cys222 are joined by a disulfide bond. N-linked (GlcNAc...) asparagine glycans are attached at residues Asn219, Asn256, Asn288, Asn309, and Asn322. A disulfide bridge links Cys269 with Cys333. A helical transmembrane segment spans residues 365 to 389; the sequence is VYAGILSYGTGLVLFILVLVIVIIC. Residues 390–806 are Cytoplasmic-facing; that stretch reads RMKMPNKKAM…HVPCNGVIRT (417 aa). In terms of domain architecture, Protein kinase spans 466–755; the sequence is LTLGKPLGEG…LTMTSTDEYL (290 aa). Residues 472–480 and Lys502 contribute to the ATP site; that span reads LGEGCFGQV. Catalysis depends on Asp611, which acts as the Proton acceptor. 4 positions are modified to phosphotyrosine; by autocatalysis: Tyr641, Tyr642, Tyr718, and Tyr754.

The protein belongs to the protein kinase superfamily. Tyr protein kinase family. Fibroblast growth factor receptor subfamily. In terms of assembly, monomer. Homodimer after ligand binding. Post-translationally, autophosphorylated. Binding of FGF family members together with heparan sulfate proteoglycan or heparin promotes receptor dimerization and autophosphorylation on tyrosine residues. Autophosphorylation occurs in trans between the two FGFR molecules present in the dimer.

It is found in the cell membrane. The enzyme catalyses L-tyrosyl-[protein] + ATP = O-phospho-L-tyrosyl-[protein] + ADP + H(+). Present in an inactive conformation in the absence of bound ligand. Ligand binding leads to dimerization and activation by autophosphorylation on tyrosine residues. In terms of biological role, tyrosine-protein kinase that acts as a cell-surface receptor for fibroblast growth factors and plays an essential role in the regulation of cell proliferation, differentiation and apoptosis. Plays an essential role in the regulation of chondrocyte differentiation, proliferation and apoptosis, and is required for normal skeleton development. Regulates both osteogenesis and postnatal bone mineralization by osteoblasts. Promotes apoptosis in chondrocytes, but can also promote cancer cell proliferation. Phosphorylates PLCG1, CBL and FRS2. Ligand binding leads to the activation of several signaling cascades. Activation of PLCG1 leads to the production of the cellular signaling molecules diacylglycerol and inositol 1,4,5-trisphosphate. Phosphorylation of FRS2 triggers recruitment of GRB2, GAB1, PIK3R1 and SOS1, and mediates activation of RAS, MAPK1/ERK2, MAPK3/ERK1 and the MAP kinase signaling pathway, as well as of the AKT1 signaling pathway. The sequence is that of Fibroblast growth factor receptor 3 (FGFR3) from Gallus gallus (Chicken).